The following is a 205-amino-acid chain: Colicin-E8 (205 aa).

Disordered stretches follow at residues 24-109 and 136-187; these read AQTD…PDRI and PELS…VYDM. 3 stretches are compositionally biased toward basic and acidic residues: residues 53-76, 88-99, and 159-178; these read QERR…ESKR, PVGDKWLDDAGK, and RNKD…DKPI. Positions 173, 198, and 202 each coordinate Zn(2+).

It belongs to the colicin/pyosin nuclease family.

This plasmid-coded bactericidal protein is an endonuclease active on both single- and double-stranded DNA but with undefined specificity. Its function is as follows. Colicins are polypeptide toxins produced by and active against E.coli and closely related bacteria. In Escherichia coli, this protein is Colicin-E8 (col).